A 168-amino-acid chain; its full sequence is Small ribosomal subunit protein uS7c (168 aa).

It belongs to the universal ribosomal protein uS7 family. As to quaternary structure, part of the 30S ribosomal subunit.

The protein localises to the plastid. Its subcellular location is the chloroplast. In terms of biological role, one of the primary rRNA binding proteins, it binds directly to 16S rRNA where it nucleates assembly of the head domain of the 30S subunit. The polypeptide is Small ribosomal subunit protein uS7c (rps7) (Chlamydomonas reinhardtii (Chlamydomonas smithii)).